A 477-amino-acid chain; its full sequence is UDP-N-acetylmuramoylalanine--D-glutamate ligase (477 aa).

125–131 provides a ligand contact to ATP; that stretch reads GTNGKST.

The protein belongs to the MurCDEF family.

It localises to the cytoplasm. It catalyses the reaction UDP-N-acetyl-alpha-D-muramoyl-L-alanine + D-glutamate + ATP = UDP-N-acetyl-alpha-D-muramoyl-L-alanyl-D-glutamate + ADP + phosphate + H(+). The protein operates within cell wall biogenesis; peptidoglycan biosynthesis. Functionally, cell wall formation. Catalyzes the addition of glutamate to the nucleotide precursor UDP-N-acetylmuramoyl-L-alanine (UMA). This chain is UDP-N-acetylmuramoylalanine--D-glutamate ligase, found in Rhodospirillum rubrum (strain ATCC 11170 / ATH 1.1.1 / DSM 467 / LMG 4362 / NCIMB 8255 / S1).